The primary structure comprises 401 residues: Tyrosine--tRNA ligase (401 aa).

A 'HIGH' region motif is present at residues 42–51 (PTAPDLHLGH). A 'KMSKS' region motif is present at residues 226 to 230 (KMSKS). Position 229 (K229) interacts with ATP. The S4 RNA-binding domain occupies 336–397 (IALAQLLKQI…GKRRIAKLSI (62 aa)).

The protein belongs to the class-I aminoacyl-tRNA synthetase family. TyrS type 2 subfamily. In terms of assembly, homodimer.

The protein localises to the cytoplasm. It catalyses the reaction tRNA(Tyr) + L-tyrosine + ATP = L-tyrosyl-tRNA(Tyr) + AMP + diphosphate + H(+). In terms of biological role, catalyzes the attachment of tyrosine to tRNA(Tyr) in a two-step reaction: tyrosine is first activated by ATP to form Tyr-AMP and then transferred to the acceptor end of tRNA(Tyr). The polypeptide is Tyrosine--tRNA ligase (Legionella pneumophila (strain Paris)).